Consider the following 525-residue polypeptide: Mitogen-activated protein kinase kinase 5 (525 aa).

The Protein kinase domain maps to 59–317 (ETEGGFLGKG…CTELLRHPFI (259 aa)). Residues 65–73 (LGKGSSGSV) and Lys88 contribute to the ATP site. The active-site Proton acceptor is Asp178. Low complexity predominate over residues 358–367 (SALPLASEGG). 2 disordered regions span residues 358 to 392 (SALPLASEGGTPKATSPSPAPVSPLTLSCPLERHD) and 438 to 468 (SASVATDSGEGGGAAGVSAASLDNGQAAQHR).

This sequence belongs to the protein kinase superfamily. STE Ser/Thr protein kinase family. MAP kinase kinase subfamily. Requires Mg(2+) as cofactor.

It catalyses the reaction L-tyrosyl-[protein] + ATP = O-phospho-L-tyrosyl-[protein] + ADP + H(+). The enzyme catalyses L-seryl-[protein] + ATP = O-phospho-L-seryl-[protein] + ADP + H(+). It carries out the reaction L-threonyl-[protein] + ATP = O-phospho-L-threonyl-[protein] + ADP + H(+). Protein kinase which phosphorylates and activates MPK4 in vitro. The polypeptide is Mitogen-activated protein kinase kinase 5 (Leishmania mexicana).